A 426-amino-acid polypeptide reads, in one-letter code: Serine hydroxymethyltransferase (426 aa).

(6S)-5,6,7,8-tetrahydrofolate-binding positions include L118 and G122–L124. N6-(pyridoxal phosphate)lysine is present on K227.

It belongs to the SHMT family. In terms of assembly, homodimer. Pyridoxal 5'-phosphate is required as a cofactor.

The protein localises to the cytoplasm. It carries out the reaction (6R)-5,10-methylene-5,6,7,8-tetrahydrofolate + glycine + H2O = (6S)-5,6,7,8-tetrahydrofolate + L-serine. It functions in the pathway one-carbon metabolism; tetrahydrofolate interconversion. The protein operates within amino-acid biosynthesis; glycine biosynthesis; glycine from L-serine: step 1/1. In terms of biological role, catalyzes the reversible interconversion of serine and glycine with tetrahydrofolate (THF) serving as the one-carbon carrier. This reaction serves as the major source of one-carbon groups required for the biosynthesis of purines, thymidylate, methionine, and other important biomolecules. Also exhibits THF-independent aldolase activity toward beta-hydroxyamino acids, producing glycine and aldehydes, via a retro-aldol mechanism. The polypeptide is Serine hydroxymethyltransferase (Mycobacterium avium (strain 104)).